We begin with the raw amino-acid sequence, 121 residues long: Large ribosomal subunit protein bL20 (121 aa).

This sequence belongs to the bacterial ribosomal protein bL20 family.

Binds directly to 23S ribosomal RNA and is necessary for the in vitro assembly process of the 50S ribosomal subunit. It is not involved in the protein synthesizing functions of that subunit. The polypeptide is Large ribosomal subunit protein bL20 (Polynucleobacter asymbioticus (strain DSM 18221 / CIP 109841 / QLW-P1DMWA-1) (Polynucleobacter necessarius subsp. asymbioticus)).